A 468-amino-acid chain; its full sequence is Zinc-regulated transporter 1 (468 aa).

The N-terminal stretch at 1–17 (MKFTHLFFIGLLTKVYT) is a signal peptide. Residues 18–185 (ETVTVLSTRS…VKRDYDIPLR (168 aa)) are Extracellular-facing. N-linked (GlcNAc...) asparagine glycans are attached at residues asparagine 57 and asparagine 67. A helical membrane pass occupies residues 186–206 (IGLLFVILVTSGIGSFGPIVL). Residues 207-217 (KQFVNLSQENY) are Cytoplasmic-facing. A helical transmembrane segment spans residues 218–238 (IIVIIKQFGTGIIISTAFVHL). At 239 to 257 (MTHAQLMWSNSCLKIKYEG) the chain is on the extracellular side. The helical transmembrane segment at 258-278 (TGASITMAGIFIAFIIEYIAL) threads the bilayer. The Cytoplasmic segment spans residues 279 to 314 (RIVNARDTGKVDKKEIEETSSNEQSLHGISVNDKIS). The helical transmembrane segment at 315 to 335 (VMILEAGIIFHSILIGITLVV) threads the bilayer. At 336–338 (TDD) the chain is on the extracellular side. A helical transmembrane segment spans residues 339–359 (VYFITLFIVIVFHQFFEGLAL). The Cytoplasmic portion of the chain corresponds to 360–374 (SSRIISITNASLSTK). The chain crosses the membrane as a helical span at residues 375 to 395 (LVMALMFALITPIGMAIGIGV). Residues 396–406 (LNKFNGNDPST) lie on the Extracellular side of the membrane. A helical membrane pass occupies residues 407 to 427 (LIALGTLDSFSAGVLLWTGLI). At 428–447 (EMWSHDWLHGHLRNSSFVKT) the chain is on the cytoplasmic side. The helical transmembrane segment at 448–468 (TVALVSLILGMLLMSLLGNWA) threads the bilayer.

It belongs to the ZIP transporter (TC 2.A.5) family.

It is found in the cell membrane. It catalyses the reaction Zn(2+)(in) = Zn(2+)(out). Zinc transporter that acts with PRA1 in sequestration of zinc from host tissues during infection. The pH-regulated antigen 1 (PRA1) binds zinc from its environment and then reassociates with ZRT1 to acquire this essential metal. The chain is Zinc-regulated transporter 1 (ZRT101) from Candida albicans (strain SC5314 / ATCC MYA-2876) (Yeast).